Reading from the N-terminus, the 827-residue chain is Zinc finger protein 438 (827 aa).

Disordered stretches follow at residues 1–31 (MQNSLSVPPRDEGESNIPSGTIQSRKGLQNK), 117–173 (LKLP…LYKP), and 193–232 (ALTNGSDHGDLRPPVTNTHGSLNPPATPASPTPEEPAKQD). 2 stretches are compositionally biased toward polar residues: residues 16 to 31 (NIPSGTIQSRKGLQNK) and 150 to 159 (PAQTQMCPQM). Residues 217 to 226 (PATPASPTPE) are compositionally biased toward pro residues. C2H2-type zinc fingers lie at residues 506 to 528 (HRCHVCNHHFQFKQHLQDHMNTH), 534 to 556 (YSCRICRKSYVRPGSLSTHMKLH), and 566 to 589 (MCCEFCAKVFGHIRVYFGHLKEVH). Residues 682–723 (FPGSKGTQEELVQHASHDWKRHPERGKPEKVHSSSEESHACP) form a disordered region. Basic and acidic residues-rich tracts occupy residues 688 to 699 (TQEELVQHASHD) and 706 to 721 (RGKPEKVHSSSEESHA). The C2H2-type 4 zinc-finger motif lies at 775–798 (FNCLLCAEMLGQKEDLLHHWKHQH).

It is found in the nucleus. Functionally, acts as a transcriptional repressor. This is Zinc finger protein 438 (ZNF438) from Pongo abelii (Sumatran orangutan).